We begin with the raw amino-acid sequence, 211 residues long: MSAIITIALSKGRILDDTLPLLAAADIEPEDDIKKSRKLIFSTNQPNVRLVVLRATDVPTYVQHGVADLGVAGKDVLMEHGYDGLYEPLDLKIATCRLMTAAMKGAAPKSGRIKVATKFVNIAKRYYAGKGIQADIIKLYGGMELAPLMGLADEIVDIVDTGNTLVANGLEPREKICDISSRLIANSASMKMKHASLQPILDKLAQAVGAE.

This sequence belongs to the ATP phosphoribosyltransferase family. Short subfamily. As to quaternary structure, heteromultimer composed of HisG and HisZ subunits.

The protein resides in the cytoplasm. The enzyme catalyses 1-(5-phospho-beta-D-ribosyl)-ATP + diphosphate = 5-phospho-alpha-D-ribose 1-diphosphate + ATP. It functions in the pathway amino-acid biosynthesis; L-histidine biosynthesis; L-histidine from 5-phospho-alpha-D-ribose 1-diphosphate: step 1/9. Functionally, catalyzes the condensation of ATP and 5-phosphoribose 1-diphosphate to form N'-(5'-phosphoribosyl)-ATP (PR-ATP). Has a crucial role in the pathway because the rate of histidine biosynthesis seems to be controlled primarily by regulation of HisG enzymatic activity. This is ATP phosphoribosyltransferase from Hahella chejuensis (strain KCTC 2396).